The primary structure comprises 140 residues: NADH-quinone oxidoreductase subunit I (140 aa).

2 consecutive 4Fe-4S ferredoxin-type domains span residues 42–71 (GSFTLHSEKCIACGLCQQACPNKVIKVGSI) and 81–110 (ASYEMEMKYCLFCGLCVEACPTNALVFNQE). Positions 51, 54, 57, 61, 90, 93, 96, and 100 each coordinate [4Fe-4S] cluster.

The protein belongs to the complex I 23 kDa subunit family. In terms of assembly, NDH-1 is composed of 14 different subunits. Subunits NuoA, H, J, K, L, M, N constitute the membrane sector of the complex. [4Fe-4S] cluster serves as cofactor.

It is found in the cell membrane. The enzyme catalyses a quinone + NADH + 5 H(+)(in) = a quinol + NAD(+) + 4 H(+)(out). Its function is as follows. NDH-1 shuttles electrons from NADH, via FMN and iron-sulfur (Fe-S) centers, to quinones in the respiratory chain. The immediate electron acceptor for the enzyme in this species is believed to be ubiquinone. Couples the redox reaction to proton translocation (for every two electrons transferred, four hydrogen ions are translocated across the cytoplasmic membrane), and thus conserves the redox energy in a proton gradient. This is NADH-quinone oxidoreductase subunit I from Carboxydothermus hydrogenoformans (strain ATCC BAA-161 / DSM 6008 / Z-2901).